Here is a 307-residue protein sequence, read N- to C-terminus: UDP-3-O-acyl-N-acetylglucosamine deacetylase (307 aa).

Residues His-78, His-241, and Asp-245 each coordinate Zn(2+). Residue His-268 is the Proton donor of the active site.

It belongs to the LpxC family. The cofactor is Zn(2+).

The catalysed reaction is a UDP-3-O-[(3R)-3-hydroxyacyl]-N-acetyl-alpha-D-glucosamine + H2O = a UDP-3-O-[(3R)-3-hydroxyacyl]-alpha-D-glucosamine + acetate. It functions in the pathway glycolipid biosynthesis; lipid IV(A) biosynthesis; lipid IV(A) from (3R)-3-hydroxytetradecanoyl-[acyl-carrier-protein] and UDP-N-acetyl-alpha-D-glucosamine: step 2/6. Catalyzes the hydrolysis of UDP-3-O-myristoyl-N-acetylglucosamine to form UDP-3-O-myristoylglucosamine and acetate, the committed step in lipid A biosynthesis. This chain is UDP-3-O-acyl-N-acetylglucosamine deacetylase, found in Acidovorax ebreus (strain TPSY) (Diaphorobacter sp. (strain TPSY)).